The primary structure comprises 1357 residues: DNA-directed RNA polymerase subunit beta (1357 aa).

It belongs to the RNA polymerase beta chain family. As to quaternary structure, the RNAP catalytic core consists of 2 alpha, 1 beta, 1 beta' and 1 omega subunit. When a sigma factor is associated with the core the holoenzyme is formed, which can initiate transcription.

The catalysed reaction is RNA(n) + a ribonucleoside 5'-triphosphate = RNA(n+1) + diphosphate. Functionally, DNA-dependent RNA polymerase catalyzes the transcription of DNA into RNA using the four ribonucleoside triphosphates as substrates. In Pseudomonas aeruginosa (strain ATCC 15692 / DSM 22644 / CIP 104116 / JCM 14847 / LMG 12228 / 1C / PRS 101 / PAO1), this protein is DNA-directed RNA polymerase subunit beta.